The sequence spans 675 residues: DNA ligase (675 aa).

NAD(+) contacts are provided by residues 36 to 40, 85 to 86, and E117; these read DAAYD and SL. K119 functions as the N6-AMP-lysine intermediate in the catalytic mechanism. The NAD(+) site is built by R140, E177, K294, and K318. Zn(2+) contacts are provided by C412, C415, C430, and C436. The BRCT domain occupies 597–675; it reads AEDLPLSGNT…EAEFLELIGE (79 aa).

Belongs to the NAD-dependent DNA ligase family. LigA subfamily. It depends on Mg(2+) as a cofactor. Mn(2+) is required as a cofactor.

The catalysed reaction is NAD(+) + (deoxyribonucleotide)n-3'-hydroxyl + 5'-phospho-(deoxyribonucleotide)m = (deoxyribonucleotide)n+m + AMP + beta-nicotinamide D-nucleotide.. Its function is as follows. DNA ligase that catalyzes the formation of phosphodiester linkages between 5'-phosphoryl and 3'-hydroxyl groups in double-stranded DNA using NAD as a coenzyme and as the energy source for the reaction. It is essential for DNA replication and repair of damaged DNA. This is DNA ligase from Thioalkalivibrio sulfidiphilus (strain HL-EbGR7).